The chain runs to 273 residues: 4-hydroxy-tetrahydrodipicolinate reductase (273 aa).

Residue 12 to 17 coordinates NAD(+); that stretch reads GANGRM. Arg-39 is an NADP(+) binding site. Residues 102-104 and 126-129 each bind NAD(+); these read GTT and AANF. His-159 functions as the Proton donor/acceptor in the catalytic mechanism. His-160 is a binding site for (S)-2,3,4,5-tetrahydrodipicolinate. Lys-163 acts as the Proton donor in catalysis. 169 to 170 contacts (S)-2,3,4,5-tetrahydrodipicolinate; that stretch reads GT.

Belongs to the DapB family. In terms of assembly, homotetramer.

The protein resides in the cytoplasm. The catalysed reaction is (S)-2,3,4,5-tetrahydrodipicolinate + NAD(+) + H2O = (2S,4S)-4-hydroxy-2,3,4,5-tetrahydrodipicolinate + NADH + H(+). It catalyses the reaction (S)-2,3,4,5-tetrahydrodipicolinate + NADP(+) + H2O = (2S,4S)-4-hydroxy-2,3,4,5-tetrahydrodipicolinate + NADPH + H(+). It functions in the pathway amino-acid biosynthesis; L-lysine biosynthesis via DAP pathway; (S)-tetrahydrodipicolinate from L-aspartate: step 4/4. In terms of biological role, catalyzes the conversion of 4-hydroxy-tetrahydrodipicolinate (HTPA) to tetrahydrodipicolinate. The chain is 4-hydroxy-tetrahydrodipicolinate reductase from Cronobacter sakazakii (strain ATCC BAA-894) (Enterobacter sakazakii).